Here is a 978-residue protein sequence, read N- to C-terminus: Calsyntenin-1 (978 aa).

The signal sequence occupies residues 1-26; it reads MTFHKTFGYGCIVLICFELLFAGVET. Residues 27–876 lie on the Extracellular side of the membrane; sequence SSENDDEYLT…SFIHKAEGSH (850 aa). 2 consecutive Cadherin domains span residues 37–143 and 144–249; these read QKEI…APTF and LEPS…MPER. Residue Asn-53 is glycosylated (N-linked (GlcNAc...) asparagine). N-linked (GlcNAc...) asparagine glycosylation is found at Asn-304, Asn-486, Asn-608, and Asn-823. A helical transmembrane segment spans residues 877-897; the sequence is VTMLIILVSVFLAVLLCGVSI. The Cytoplasmic segment spans residues 898 to 978; it reads ARLKNNQKYI…EWDNSNIFQQ (81 aa). The segment at 937 to 958 is disordered; sequence ADVTSDASSESENSESEDEEAL. Over residues 948-957 the composition is skewed to acidic residues; that stretch reads ENSESEDEEA.

This sequence belongs to the calsyntenin family.

It localises to the postsynaptic cell membrane. Its function is as follows. Postsynaptic adhesion molecule that binds to presynaptic neurexins to mediate both excitatory and inhibitory synapse formation. Promotes synapse development by acting as a cell adhesion molecule at the postsynaptic membrane, which associates with neurexin-alpha at the presynaptic membrane. This is Calsyntenin-1 (Cals) from Drosophila melanogaster (Fruit fly).